A 1061-amino-acid chain; its full sequence is Isoleucine--tRNA ligase (1061 aa).

Residues 50–60 (PYTSGSAHMGT) carry the 'HIGH' region motif. Residues 604–608 (KMSKS) carry the 'KMSKS' region motif. Lysine 607 contacts ATP.

Belongs to the class-I aminoacyl-tRNA synthetase family. IleS type 2 subfamily. In terms of assembly, monomer. Zn(2+) serves as cofactor.

It localises to the cytoplasm. It carries out the reaction tRNA(Ile) + L-isoleucine + ATP = L-isoleucyl-tRNA(Ile) + AMP + diphosphate. Functionally, catalyzes the attachment of isoleucine to tRNA(Ile). As IleRS can inadvertently accommodate and process structurally similar amino acids such as valine, to avoid such errors it has two additional distinct tRNA(Ile)-dependent editing activities. One activity is designated as 'pretransfer' editing and involves the hydrolysis of activated Val-AMP. The other activity is designated 'posttransfer' editing and involves deacylation of mischarged Val-tRNA(Ile). The protein is Isoleucine--tRNA ligase of Natronomonas pharaonis (strain ATCC 35678 / DSM 2160 / CIP 103997 / JCM 8858 / NBRC 14720 / NCIMB 2260 / Gabara) (Halobacterium pharaonis).